A 322-amino-acid polypeptide reads, in one-letter code: Sideroflexin-2 (322 aa).

Methionine 1 carries the N-acetylmethionine modification. 5 helical membrane-spanning segments follow: residues 100–122 (MIIT…WQWV), 142–164 (SVRQ…AVGM), 174–192 (LVGR…CVNI), 228–250 (VVIS…MERL), and 265–287 (PLQV…GLFP).

It belongs to the sideroflexin family. As to expression, widely expressed, highest levels in kidney, liver, and pancreas.

The protein localises to the mitochondrion inner membrane. It localises to the mitochondrion outer membrane. The enzyme catalyses L-serine(in) = L-serine(out). In terms of biological role, mitochondrial amino-acid transporter that mediates transport of serine into mitochondria. Involved in mitochondrial iron homeostasis by regulating heme biosynthesis. This is Sideroflexin-2 from Homo sapiens (Human).